The primary structure comprises 261 residues: Indole-3-glycerol phosphate synthase (261 aa).

This sequence belongs to the TrpC family.

It carries out the reaction 1-(2-carboxyphenylamino)-1-deoxy-D-ribulose 5-phosphate + H(+) = (1S,2R)-1-C-(indol-3-yl)glycerol 3-phosphate + CO2 + H2O. It functions in the pathway amino-acid biosynthesis; L-tryptophan biosynthesis; L-tryptophan from chorismate: step 4/5. The sequence is that of Indole-3-glycerol phosphate synthase from Burkholderia ambifaria (strain ATCC BAA-244 / DSM 16087 / CCUG 44356 / LMG 19182 / AMMD) (Burkholderia cepacia (strain AMMD)).